The following is a 383-amino-acid chain: S-adenosylmethionine synthase (383 aa).

Histidine 16 contributes to the ATP binding site. A Mg(2+)-binding site is contributed by aspartate 18. Glutamate 44 contributes to the K(+) binding site. The L-methionine site is built by glutamate 57 and glutamine 98. A flexible loop region spans residues 98–108 (QSPDIAMGVDI). Residues 158–160 (DQK), 226–227 (RF), aspartate 235, 241–242 (RK), alanine 258, and lysine 262 contribute to the ATP site. Residue aspartate 235 coordinates L-methionine. Lysine 266 is an L-methionine binding site.

The protein belongs to the AdoMet synthase family. As to quaternary structure, homotetramer; dimer of dimers. It depends on Mg(2+) as a cofactor. K(+) serves as cofactor.

Its subcellular location is the cytoplasm. It catalyses the reaction L-methionine + ATP + H2O = S-adenosyl-L-methionine + phosphate + diphosphate. The protein operates within amino-acid biosynthesis; S-adenosyl-L-methionine biosynthesis; S-adenosyl-L-methionine from L-methionine: step 1/1. In terms of biological role, catalyzes the formation of S-adenosylmethionine (AdoMet) from methionine and ATP. The overall synthetic reaction is composed of two sequential steps, AdoMet formation and the subsequent tripolyphosphate hydrolysis which occurs prior to release of AdoMet from the enzyme. The polypeptide is S-adenosylmethionine synthase (Fusobacterium nucleatum subsp. nucleatum (strain ATCC 25586 / DSM 15643 / BCRC 10681 / CIP 101130 / JCM 8532 / KCTC 2640 / LMG 13131 / VPI 4355)).